Reading from the N-terminus, the 395-residue chain is Flagellin B (395 aa).

Belongs to the bacterial flagellin family.

It is found in the secreted. The protein resides in the bacterial flagellum. Functionally, flagellin is the subunit protein which polymerizes to form the filaments of bacterial flagella. The sequence is that of Flagellin B (flaB) from Rhizobium meliloti (Ensifer meliloti).